The primary structure comprises 556 residues: Formate--tetrahydrofolate ligase (556 aa).

Position 65–72 (65–72 (TPAGEGKS)) interacts with ATP.

This sequence belongs to the formate--tetrahydrofolate ligase family.

It catalyses the reaction (6S)-5,6,7,8-tetrahydrofolate + formate + ATP = (6R)-10-formyltetrahydrofolate + ADP + phosphate. It participates in one-carbon metabolism; tetrahydrofolate interconversion. This chain is Formate--tetrahydrofolate ligase, found in Streptococcus mutans serotype c (strain ATCC 700610 / UA159).